Consider the following 125-residue polypeptide: MKNFLVKTIANAGALAVAVWLLDKITLTGGSTGEKTLTLIVVALVFGLVNMVVKPIVQVLTFPLFILTLGLFTLVVNALMLLLTSWVADKLDLSFHVDGFWTAVLGGLIVSIVSWALNAFLPDGD.

4 helical membrane-spanning segments follow: residues 9 to 29 (IANAGALAVAVWLLDKITLTG), 33 to 53 (GEKTLTLIVVALVFGLVNMVV), 56 to 76 (IVQVLTFPLFILTLGLFTLVV), and 100 to 120 (FWTAVLGGLIVSIVSWALNAF).

The protein localises to the cell membrane. This is an uncharacterized protein from Streptomyces coelicolor (strain ATCC BAA-471 / A3(2) / M145).